The primary structure comprises 129 residues: Protein Turandot A (129 aa).

A signal peptide spans 1–21 (MNSLTGFMCCALLLISPLCMG). The N-linked (GlcNAc...) asparagine glycan is linked to Asn-49.

Belongs to the Turandot family.

It localises to the secreted. Functionally, a humoral factor that plays a role in stress tolerance; gives increased resistance to the lethal effects of bacterial challenge and stress. Regulated by the JAK/STAT pathway and NF-KB-like Relish pathway in the fat body, upd3 in the hemocytes and Mekk1 in response to septic injury and consequent immune response. The chain is Protein Turandot A (TotA) from Drosophila yakuba (Fruit fly).